A 185-amino-acid chain; its full sequence is Ribosome-recycling factor (185 aa).

This sequence belongs to the RRF family.

The protein localises to the cytoplasm. Responsible for the release of ribosomes from messenger RNA at the termination of protein biosynthesis. May increase the efficiency of translation by recycling ribosomes from one round of translation to another. The sequence is that of Ribosome-recycling factor from Pelobacter propionicus (strain DSM 2379 / NBRC 103807 / OttBd1).